The following is a 126-amino-acid chain: Large ribosomal subunit protein bL12 (126 aa).

It belongs to the bacterial ribosomal protein bL12 family. In terms of assembly, homodimer. Part of the ribosomal stalk of the 50S ribosomal subunit. Forms a multimeric L10(L12)X complex, where L10 forms an elongated spine to which 2 to 4 L12 dimers bind in a sequential fashion. Binds GTP-bound translation factors.

Its function is as follows. Forms part of the ribosomal stalk which helps the ribosome interact with GTP-bound translation factors. Is thus essential for accurate translation. This is Large ribosomal subunit protein bL12 from Desulfatibacillum aliphaticivorans.